Reading from the N-terminus, the 330-residue chain is 2-keto-3-deoxygluconate permease (330 aa).

Helical transmembrane passes span Val-10–Pro-30, Ala-42–Ile-62, Leu-77–Pro-97, Gly-100–Glu-120, Gly-140–Val-160, Leu-163–Ile-183, Pro-200–Ile-220, Leu-224–Leu-244, Val-254–Ala-274, and Ala-289–Val-309.

The protein belongs to the KdgT transporter family.

Its subcellular location is the cell membrane. The catalysed reaction is 2-dehydro-3-deoxy-D-gluconate(in) + H(+)(in) = 2-dehydro-3-deoxy-D-gluconate(out) + H(+)(out). Its function is as follows. Catalyzes the proton-dependent uptake of 2-keto-3-deoxygluconate (KDG) into the cell. The protein is 2-keto-3-deoxygluconate permease of Bacillus subtilis (strain 168).